Consider the following 204-residue polypeptide: uncharacterized protein (204 aa).

Its subcellular location is the cytoplasm. The protein localises to the nucleus. This is an uncharacterized protein from Schizosaccharomyces pombe (strain 972 / ATCC 24843) (Fission yeast).